The primary structure comprises 366 residues: Isopropyl malate dehydrogenase htyC (366 aa).

V71–G73 contacts NADP(+). Residues R91 and R130 each coordinate substrate. Residues D221, D246, and D250 each coordinate Mg(2+). G277–I282 serves as a coordination point for NADP(+).

It belongs to the isocitrate and isopropylmalate dehydrogenases family. As to quaternary structure, homodimer. Mg(2+) is required as a cofactor. It depends on Mn(2+) as a cofactor.

The enzyme catalyses (2R,3S)-3-isopropylmalate + NAD(+) = 4-methyl-2-oxopentanoate + CO2 + NADH. It functions in the pathway antifungal biosynthesis. Its function is as follows. Isopropyl malate dehydrogenase; part of the gene cluster that mediates the de novo generation of L-homotyrosine from acetyl-CoA and 4-hydroxyphenyl-pyruvate. L-homotyrosine is a building block of echinocandin B, a fungal lipidated cyclic hexapeptide that acts as an antifungal agent. L-homotyrosine 4-hydroxyphenyl-pyruvate first undergoes an aldol-type condensation by htyA with the C-2 of acetyl-CoA followed by the release of CoA to form 2-(4-hydroxybenzyl)-malate. This is followed by isomerization of 2-(4-hydroxy-benzyl)-malate to 3-(4-hydroxybenzyl)-malate by htyD. Thereafter, 3-(4-hydroxybenzyl)-malate undergoes decarboxylation and oxidation to form 2-oxo-4-(4-hydroxybenzyl)butanoic acid, coupled to reduction of NAD(+) to NADH by htyC. The product then undergoes transamination catalyzed by htyB to form L-homotyrosine. This Aspergillus rugulosus (Emericella rugulosa) protein is Isopropyl malate dehydrogenase htyC.